The following is a 3901-amino-acid chain: Nonribosomal peptide synthetase opaA (3901 aa).

The interval 248 to 641 is adenylation 1; sequence HNAQHHPSVV…HRKDNQIKIR (394 aa). The 75-residue stretch at 780-854 folds into the Carrier 1 domain; that stretch reads LPVTANEIVV…DMATRLTRIK (75 aa). O-(pantetheine 4'-phosphoryl)serine is present on serine 815. The tract at residues 891–1164 is condensation 1; sequence DAYPCSALQE…IATVPIRINL (274 aa). The tract at residues 1328-1725 is adenylation 2; the sequence is QSHAQKTPKS…GRIGNQVKLR (398 aa). Residues 1858-1936 enclose the Carrier 2 domain; it reads RTPLDTERDL…QIAAQAATRA (79 aa). Position 1895 is an O-(pantetheine 4'-phosphoryl)serine (serine 1895). The epimerase stretch occupies residues 1953-2261; it reads KLTPIQQLFF…KDARRRLTRN (309 aa). A condensation 2 region spans residues 2403 to 2826; that stretch reads ENLYPCAPIQ…LVSTDHKRLL (424 aa). The adenylation 3 stretch occupies residues 2846–3243; sequence QQHVRETPDA…GRKDSQIKIR (398 aa). The Carrier 3 domain occupies 3375–3451; the sequence is LPSTAGEQLL…ALAARSRSKD (77 aa). Serine 3412 is modified (O-(pantetheine 4'-phosphoryl)serine). The interval 3509–3837 is condensation 3; the sequence is HHFSFAVEGK…EDLKTHFTLN (329 aa).

It belongs to the NRP synthetase family.

Its function is as follows. Nonribosomal peptide synthetase; part of the gene cluster that mediates the biosynthesis of oxepinamides, derivatives of anthranilyl-containing tripeptides that share an oxepin ring and a fused pyrimidinone moiety. The nonribosomal peptide synthetase (NRPS) opaA assembles the quinazolinone core with D-Phe incorporation. The first adenylation domain (A1) of opaA loads and activates anthranilic acid whereas the second A domain (A2) is for activating of L-Phe, which is then converted to D-form by the E domain. The third A domain (A3) is responsible for L-Ile activation and the terminal condensation domain C3 for cyclization and releasing the NRPS product protuboxepin K. The cytochrome P450 monooxygenase opaB then catalyzes alone the oxepin ring formation to convert protuboxepin K into protuboxepin A. The flavoenzyme opaC installs subsequently one hydroxyl group at the oxepin ring, accompanied by double bond migration, to form 15-epi-oxepinamide E. The epimerase opaE changes the D-Phe residue back to L-form, leading to oxepinamide E, which is further methylated at the hydroxyl group at C-12 by the O-methyltransferase OpaF to yield oxepinamide F. In Aspergillus ustus, this protein is Nonribosomal peptide synthetase opaA.